The following is a 409-amino-acid chain: Fructose-1,6-bisphosphatase, chloroplastic (409 aa).

The transit peptide at 1–49 directs the protein to the chloroplast; sequence MAAATTTTSRPLLLSRQQAAASSLQCRLPRRPGSSLFAGQGQASTPNVR. Glutamate 131, glutamate 160, aspartate 181, leucine 183, and aspartate 184 together coordinate Mg(2+). 184-187 provides a ligand contact to substrate; the sequence is DGSS. Cysteines 223 and 228 form a disulfide. Positions 287, 319, 337, 339, and 349 each coordinate substrate. Residue glutamate 355 coordinates Mg(2+).

Belongs to the FBPase class 1 family. In terms of assembly, homotetramer. Mg(2+) serves as cofactor. As to expression, in photosynthetically active tissues, and in the shoot and root apical meristems.

It localises to the plastid. It is found in the chloroplast. The enzyme catalyses beta-D-fructose 1,6-bisphosphate + H2O = beta-D-fructose 6-phosphate + phosphate. Its pathway is carbohydrate biosynthesis; Calvin cycle. This chain is Fructose-1,6-bisphosphatase, chloroplastic (FBP), found in Triticum aestivum (Wheat).